Reading from the N-terminus, the 827-residue chain is Inactive rhomboid protein 2 (827 aa).

Residues 1–87 are disordered; sequence MDSTDKNGES…GFRRQASLSQ (87 aa). The Cytoplasmic portion of the chain corresponds to 1 to 380; that stretch reads MDSTDKNGES…HRPYFTYWLT (380 aa). Phosphoserine is present on Ser-60. The segment covering 64-77 has biased composition (basic and acidic residues); it reads QRGRWQEGSSEKRP. A phosphoserine mark is found at Ser-84, Ser-88, Ser-294, Ser-296, and Ser-299. The chain crosses the membrane as a helical span at residues 381-401; the sequence is FVHIIITLLVICTYGIAPVGF. Topologically, residues 402–631 are lumenal; sequence AQHVTTQLVL…PDQFYRLWLS (230 aa). A helical membrane pass occupies residues 632 to 652; it reads LFLHAGVVHCLVSVVFQMTIL. At 653–663 the chain is on the cytoplasmic side; sequence RDLEKLAGWHR. A helical transmembrane segment spans residues 664–684; it reads IAIIFILSGITGNLASAIFLP. Residues 685 to 686 are Lumenal-facing; that stretch reads YR. The helical transmembrane segment at 687-707 threads the bilayer; that stretch reads AEVGPAGSQFGLLACLFVELF. Topologically, residues 708–718 are cytoplasmic; sequence QSWQLLERPWK. Residues 719 to 739 traverse the membrane as a helical segment; it reads AFLNLSAIVLFLFICGLLPWI. Residues 740–744 lie on the Lumenal side of the membrane; sequence DNIAH. Residues 745–765 traverse the membrane as a helical segment; sequence IFGFLSGLLLAFAFLPYITFG. Over 766–773 the chain is Cytoplasmic; the sequence is TSDKYRKR. A helical membrane pass occupies residues 774-794; the sequence is ALILVSLLVFAGLFASLVIWL. Residues 795-827 lie on the Lumenal side of the membrane; sequence YVYPINWPWIEYLTCFPFTSRFCEKYELDQVLH.

This sequence belongs to the peptidase S54 family. In terms of assembly, interacts with EGF. Interacts (via cytoplasmic N-terminus) with FRMD8/iTAP; this interaction leads to mutual protein stabilization. Interacts with ADAM17/TACE. As to expression, detected in retina and spleen.

The protein resides in the endoplasmic reticulum membrane. Its subcellular location is the cell membrane. Its function is as follows. Regulates ADAM17 protease, a sheddase of the epidermal growth factor (EGF) receptor ligands and TNF, thereby plays a role in sleep, cell survival, proliferation, migration and inflammation. Does not exhibit any protease activity on its own. The chain is Inactive rhomboid protein 2 (RHBDF2) from Canis lupus familiaris (Dog).